A 55-amino-acid polypeptide reads, in one-letter code: Large ribosomal subunit protein bL33 (55 aa).

This sequence belongs to the bacterial ribosomal protein bL33 family.

In Methylobacterium radiotolerans (strain ATCC 27329 / DSM 1819 / JCM 2831 / NBRC 15690 / NCIMB 10815 / 0-1), this protein is Large ribosomal subunit protein bL33.